The sequence spans 463 residues: Annexin A7 (463 aa).

The span at 1-18 (MSYPGYPPTGYPPFPGYP) shows a compositional bias: pro residues. 2 disordered regions span residues 1-34 (MSYP…QYPY) and 77-149 (SPGG…MTQG). The segment at 1–143 (MSYPGYPPTG…GGQAPYPSQP (143 aa)) is repeat-rich region. Positions 5–20 (GYPPTGYPPFPGYPPA) are 3 X 5 AA tandem repeats of G-Y-P-P-X. A compositionally biased stretch (gly residues) spans 86-99 (GGQGFGAPPGGAGF). Annexin repeat units lie at residues 160 to 231 (FDAM…ALFM), 232 to 303 (PSTY…SMCQ), 315 to 387 (QMAQ…TILQ), and 391 to 462 (NRPA…AIVG). An N6-acetyllysine modification is found at lysine 208.

This sequence belongs to the annexin family. In terms of assembly, interacts with PDCD6.

Its function is as follows. Calcium/phospholipid-binding protein which promotes membrane fusion and is involved in exocytosis. In Mus musculus (Mouse), this protein is Annexin A7 (Anxa7).